The chain runs to 462 residues: Glycine--tRNA ligase (462 aa).

Substrate-binding residues include arginine 100 and glutamate 174. ATP-binding positions include 206-208 (RNE), 216-221 (FRTREF), 290-291 (EL), and 334-337 (GADR). 221–225 (FEQME) is a substrate binding site. 330 to 334 (EPSLG) serves as a coordination point for substrate.

The protein belongs to the class-II aminoacyl-tRNA synthetase family. Homodimer.

Its subcellular location is the cytoplasm. It carries out the reaction tRNA(Gly) + glycine + ATP = glycyl-tRNA(Gly) + AMP + diphosphate. Catalyzes the attachment of glycine to tRNA(Gly). The sequence is that of Glycine--tRNA ligase from Alkaliphilus metalliredigens (strain QYMF).